The chain runs to 396 residues: Phosphoglycerate kinase (396 aa).

Residues 21–23, arginine 37, 60–63, arginine 121, and arginine 154 each bind substrate; these read DFN and HLGR. ATP-binding positions include lysine 205, glycine 296, glutamate 327, and 353 to 356; that span reads GGDS.

It belongs to the phosphoglycerate kinase family. Monomer.

The protein resides in the cytoplasm. It carries out the reaction (2R)-3-phosphoglycerate + ATP = (2R)-3-phospho-glyceroyl phosphate + ADP. Its pathway is carbohydrate degradation; glycolysis; pyruvate from D-glyceraldehyde 3-phosphate: step 2/5. The polypeptide is Phosphoglycerate kinase (Anaeromyxobacter sp. (strain K)).